Here is a 290-residue protein sequence, read N- to C-terminus: Small ribosomal subunit biogenesis GTPase RsgA (290 aa).

The region spanning 62 to 213 (KNSLVRPPIV…IADTPGFSSL (152 aa)) is the CP-type G domain. GTP is bound by residues 111–114 (SKTD) and 156–164 (GQTGVGKTT). Zn(2+) contacts are provided by Cys-237, Cys-242, His-244, and Cys-250.

This sequence belongs to the TRAFAC class YlqF/YawG GTPase family. RsgA subfamily. As to quaternary structure, monomer. Associates with 30S ribosomal subunit, binds 16S rRNA. Requires Zn(2+) as cofactor.

It is found in the cytoplasm. Its function is as follows. One of several proteins that assist in the late maturation steps of the functional core of the 30S ribosomal subunit. Helps release RbfA from mature subunits. May play a role in the assembly of ribosomal proteins into the subunit. Circularly permuted GTPase that catalyzes slow GTP hydrolysis, GTPase activity is stimulated by the 30S ribosomal subunit. This Streptococcus mutans serotype c (strain ATCC 700610 / UA159) protein is Small ribosomal subunit biogenesis GTPase RsgA.